The sequence spans 116 residues: Large ribosomal subunit protein bL17 (116 aa).

Belongs to the bacterial ribosomal protein bL17 family. As to quaternary structure, part of the 50S ribosomal subunit. Contacts protein L32.

This chain is Large ribosomal subunit protein bL17, found in Synechococcus sp. (strain RCC307).